A 775-amino-acid chain; its full sequence is Probable ubiquitin carboxyl-terminal hydrolase creB (775 aa).

A disordered region spans residues 1–45; that stretch reads MGSFLRSFRHNGGSTAPSVGAVPAKKEPQPPPMTPLEKRLLDMGP. The span at 36–45 shows a compositional bias: basic and acidic residues; that stretch reads LEKRLLDMGP. A USP domain is found at 55–468; the sequence is YGMENYGNTC…CAYVLFYQET (414 aa). C64 acts as the Nucleophile in catalysis. Disordered stretches follow at residues 113-146 and 238-269; these read EAEAQAEKQKAANAQRPGMPPNPQQKPEDKDSPE and ASKQPPIEKSLPAPETADSVDQSSSTGSKTPN. Polar residues predominate over residues 256–269; it reads SVDQSSSTGSKTPN. H419 (proton acceptor) is an active-site residue. The tract at residues 496 to 775 is disordered; sequence LKQNGFPQSP…LRKKSFSILS (280 aa). Low complexity-rich tracts occupy residues 546–566 and 576–585; these read ESAPFSPLSPLSPLSPLSPLS and ERVTTVATPP. Residues 586–653 are a coiled coil; that stretch reads KNDALAKKER…ASKAEEDRRL (68 aa). Residues 589-662 are compositionally biased toward basic and acidic residues; it reads ALAKKERARE…LSHENGKEKQ (74 aa). Residues 668 to 679 show a composition bias toward basic residues; that stretch reads RLKRGSKSLSHR. Low complexity predominate over residues 705–725; sequence SQTGPTSEQQQQQQQQQSPPN. A compositionally biased stretch (basic and acidic residues) spans 739 to 757; sequence TIREDEQVNHKDSKHERTG. Over residues 758–775 the composition is skewed to basic residues; it reads HGKWRSFSLRKKSFSILS.

It belongs to the peptidase C19 family. As to quaternary structure, interacts with creA, creC and qutD.

It carries out the reaction Thiol-dependent hydrolysis of ester, thioester, amide, peptide and isopeptide bonds formed by the C-terminal Gly of ubiquitin (a 76-residue protein attached to proteins as an intracellular targeting signal).. Ubiquitin thioesterase component of the regulatory network controlling carbon source utilization through ubiquitination and deubiquitination involving creA, creB, creC, creD and acrB. Deubiquitinates the creA catabolic repressor and the quinate permease qutD. Also plays a role in response to carbon starvation and the control of extracellular proteases activity. In Aspergillus fumigatus (strain ATCC MYA-4609 / CBS 101355 / FGSC A1100 / Af293) (Neosartorya fumigata), this protein is Probable ubiquitin carboxyl-terminal hydrolase creB (creB).